Reading from the N-terminus, the 183-residue chain is GMP synthase [glutamine-hydrolyzing] subunit A (183 aa).

One can recognise a Glutamine amidotransferase type-1 domain in the interval 3–183 (HILVVDNHGQ…VFENFVAICE (181 aa)). Cysteine 74 (nucleophile) is an active-site residue. Residues histidine 162 and glutamate 164 contribute to the active site.

Heterodimer composed of a glutamine amidotransferase subunit (A) and a GMP-binding subunit (B).

It carries out the reaction XMP + L-glutamine + ATP + H2O = GMP + L-glutamate + AMP + diphosphate + 2 H(+). Its pathway is purine metabolism; GMP biosynthesis; GMP from XMP (L-Gln route): step 1/1. Its function is as follows. Catalyzes the synthesis of GMP from XMP. The protein is GMP synthase [glutamine-hydrolyzing] subunit A of Halobacterium salinarum (strain ATCC 700922 / JCM 11081 / NRC-1) (Halobacterium halobium).